The primary structure comprises 59 residues: Photosystem II reaction center protein K (59 aa).

The propeptide occupies 1 to 22; sequence MILYSHLSTLIDIDLSNNIFLA. A helical transmembrane segment spans residues 30–50; the sequence is IFDPLVDVMPVIPVFFLLLAF.

Belongs to the PsbK family. PSII is composed of 1 copy each of membrane proteins PsbA, PsbB, PsbC, PsbD, PsbE, PsbF, PsbH, PsbI, PsbJ, PsbK, PsbL, PsbM, PsbT, PsbX, PsbY, PsbZ, Psb30/Ycf12, at least 3 peripheral proteins of the oxygen-evolving complex and a large number of cofactors. It forms dimeric complexes.

It localises to the plastid. The protein localises to the chloroplast thylakoid membrane. One of the components of the core complex of photosystem II (PSII). PSII is a light-driven water:plastoquinone oxidoreductase that uses light energy to abstract electrons from H(2)O, generating O(2) and a proton gradient subsequently used for ATP formation. It consists of a core antenna complex that captures photons, and an electron transfer chain that converts photonic excitation into a charge separation. The polypeptide is Photosystem II reaction center protein K (Chara vulgaris (Common stonewort)).